The sequence spans 318 residues: Serpentine receptor class delta-25 (318 aa).

7 helical membrane passes run 5 to 25, 38 to 58, 88 to 108, 126 to 146, 176 to 196, 226 to 246, and 258 to 278; these read LLHS…MYLA, VVIT…FFVM, HMFM…SYLF, IAFY…SIYI, ITLL…YTFI, TFKL…VAMF, and IVSV…IIFV.

The protein belongs to the nematode receptor-like protein srd family.

It is found in the membrane. This Caenorhabditis elegans protein is Serpentine receptor class delta-25 (srd-25).